A 356-amino-acid polypeptide reads, in one-letter code: Cyclin-A1-4 (356 aa).

Belongs to the cyclin family. Cyclin AB subfamily.

This chain is Cyclin-A1-4 (CYCA1-4), found in Oryza sativa subsp. japonica (Rice).